The primary structure comprises 325 residues: NADH-quinone oxidoreductase subunit H (325 aa).

Transmembrane regions (helical) follow at residues 11-31 (ILLSILKAVVILLVVVTCGAF), 81-101 (VIFTLAPVIAFTSLLLAFAIV), 114-134 (IGILFFLMMAGLAVYAVLFAG), 154-174 (LSYEVFLGLSLMGVVAQAGSF), 186-206 (LWNVIPQFFGFVTFAIAGVAV), 237-257 (FFVGEYIGIVTVSALIVTLFF), 265-285 (LPPFIWFALKTAFFMMMFILI), and 304-324 (VCLPLTLVNLLVTAAVILWQA).

It belongs to the complex I subunit 1 family. In terms of assembly, NDH-1 is composed of 13 different subunits. Subunits NuoA, H, J, K, L, M, N constitute the membrane sector of the complex.

It is found in the cell inner membrane. It catalyses the reaction a quinone + NADH + 5 H(+)(in) = a quinol + NAD(+) + 4 H(+)(out). NDH-1 shuttles electrons from NADH, via FMN and iron-sulfur (Fe-S) centers, to quinones in the respiratory chain. The immediate electron acceptor for the enzyme in this species is believed to be ubiquinone. Couples the redox reaction to proton translocation (for every two electrons transferred, four hydrogen ions are translocated across the cytoplasmic membrane), and thus conserves the redox energy in a proton gradient. This subunit may bind ubiquinone. This is NADH-quinone oxidoreductase subunit H from Klebsiella pneumoniae (strain 342).